Reading from the N-terminus, the 473-residue chain is MASVSWRAVAVAMVVVLLSLQWFAKGYPEEDLVVRLPGQPTVGFKQYAGYVDVDVKAGRSLFYYYVEAVKQPDSKPLTLWLNGGPGCSSIGGGAFTELGPFYPTGDGRGLRVNSMSWNKASHLLFVESPAGVGWSYSNKSSDYNTGDKSTANDMLVFLLRWFEKFPKLKSRDLFLTGESYAGHYIPQLADAILSYNSHSSGFKFNIKGVAIGNPLLKLDRDSPATYEFFWSHGMISDELKLTITSQCDFDDYTFASPHNVSTACNEAISETENIITEYVNNYDVLLDVCYPSIVQQELRLKKMATKMSMGVDVCMTYERRFYFNLPEVQKALHANRTHLPYSWSMCSGVLNYSDIDGNIDMLPILKRIILNKTPIWIFSGDQDSVVPFGGSRTLVRELAQDLNFKTTVPYGAWFHKSQVGGWAIEYGKLLTFATVRGAAHMVPYAQPSRALHLFSSFVSGRRLPNNTHSSTDE.

The signal sequence occupies residues 1–26 (MASVSWRAVAVAMVVVLLSLQWFAKG). Intrachain disulfides connect Cys-87-Cys-346, Cys-247-Cys-264, and Cys-289-Cys-314. A glycan (N-linked (GlcNAc...) asparagine) is linked at Asn-138. Residue Ser-179 is part of the active site. Asn-259 is a glycosylation site (N-linked (GlcNAc...) asparagine). N-linked (GlcNAc...) asparagine glycans are attached at residues Asn-335 and Asn-351. Residues Asp-383 and His-440 contribute to the active site. A glycan (N-linked (GlcNAc...) asparagine) is linked at Asn-465.

This sequence belongs to the peptidase S10 family. As to expression, expression not detected.

It is found in the secreted. Probable carboxypeptidase. The protein is Serine carboxypeptidase-like 42 (SCPL42) of Arabidopsis thaliana (Mouse-ear cress).